Reading from the N-terminus, the 232-residue chain is Phosphatidylserine decarboxylase proenzyme (232 aa).

Serine 190 functions as the Schiff-base intermediate with substrate; via pyruvic acid in the catalytic mechanism. Residue serine 190 is modified to Pyruvic acid (Ser); by autocatalysis.

This sequence belongs to the phosphatidylserine decarboxylase family. PSD-A subfamily. As to quaternary structure, heterodimer of a large membrane-associated beta subunit and a small pyruvoyl-containing alpha subunit. The cofactor is pyruvate. Is synthesized initially as an inactive proenzyme. Formation of the active enzyme involves a self-maturation process in which the active site pyruvoyl group is generated from an internal serine residue via an autocatalytic post-translational modification. Two non-identical subunits are generated from the proenzyme in this reaction, and the pyruvate is formed at the N-terminus of the alpha chain, which is derived from the carboxyl end of the proenzyme. The post-translation cleavage follows an unusual pathway, termed non-hydrolytic serinolysis, in which the side chain hydroxyl group of the serine supplies its oxygen atom to form the C-terminus of the beta chain, while the remainder of the serine residue undergoes an oxidative deamination to produce ammonia and the pyruvoyl prosthetic group on the alpha chain.

It is found in the cell membrane. It catalyses the reaction a 1,2-diacyl-sn-glycero-3-phospho-L-serine + H(+) = a 1,2-diacyl-sn-glycero-3-phosphoethanolamine + CO2. Its pathway is phospholipid metabolism; phosphatidylethanolamine biosynthesis; phosphatidylethanolamine from CDP-diacylglycerol: step 2/2. Functionally, catalyzes the formation of phosphatidylethanolamine (PtdEtn) from phosphatidylserine (PtdSer). In Brucella abortus (strain S19), this protein is Phosphatidylserine decarboxylase proenzyme.